Reading from the N-terminus, the 148-residue chain is Large ribosomal subunit protein bL9 (148 aa).

Belongs to the bacterial ribosomal protein bL9 family.

Functionally, binds to the 23S rRNA. The polypeptide is Large ribosomal subunit protein bL9 (Pelotomaculum thermopropionicum (strain DSM 13744 / JCM 10971 / SI)).